Consider the following 213-residue polypeptide: Glycerol-3-phosphate acyltransferase (213 aa).

6 helical membrane passes run 4–24 (IILL…LWIG), 48–68 (ILGV…GTLA), 71–91 (LPLF…LAVI), 113–133 (VILG…IIVL), 144–164 (VIGA…GFIL), and 165–185 (TSYD…IILR).

This sequence belongs to the PlsY family. As to quaternary structure, probably interacts with PlsX.

The protein resides in the cell membrane. The catalysed reaction is an acyl phosphate + sn-glycerol 3-phosphate = a 1-acyl-sn-glycero-3-phosphate + phosphate. The protein operates within lipid metabolism; phospholipid metabolism. Functionally, catalyzes the transfer of an acyl group from acyl-phosphate (acyl-PO(4)) to glycerol-3-phosphate (G3P) to form lysophosphatidic acid (LPA). This enzyme utilizes acyl-phosphate as fatty acyl donor, but not acyl-CoA or acyl-ACP. This is Glycerol-3-phosphate acyltransferase from Lactococcus lactis subsp. lactis (strain IL1403) (Streptococcus lactis).